The following is a 63-amino-acid chain: Large ribosomal subunit protein bL32 (63 aa).

The tract at residues 1–20 (MANPKAKMSKSRRDKRRAQF) is disordered. Residues 7 to 18 (KMSKSRRDKRRA) show a composition bias toward basic residues.

Belongs to the bacterial ribosomal protein bL32 family.

The sequence is that of Large ribosomal subunit protein bL32 from Chlorobaculum tepidum (strain ATCC 49652 / DSM 12025 / NBRC 103806 / TLS) (Chlorobium tepidum).